A 483-amino-acid chain; its full sequence is ATP synthase subunit beta, chloroplastic (483 aa).

163–170 (GGAGVGKT) serves as a coordination point for ATP.

It belongs to the ATPase alpha/beta chains family. As to quaternary structure, F-type ATPases have 2 components, CF(1) - the catalytic core - and CF(0) - the membrane proton channel. CF(1) has five subunits: alpha(3), beta(3), gamma(1), delta(1), epsilon(1). CF(0) has four main subunits: a(1), b(1), b'(1) and c(9-12).

It localises to the plastid. Its subcellular location is the chloroplast thylakoid membrane. It carries out the reaction ATP + H2O + 4 H(+)(in) = ADP + phosphate + 5 H(+)(out). Produces ATP from ADP in the presence of a proton gradient across the membrane. The catalytic sites are hosted primarily by the beta subunits. The polypeptide is ATP synthase subunit beta, chloroplastic (Ostreococcus tauri).